The chain runs to 102 residues: Ribonuclease P protein component 1 (102 aa).

The protein belongs to the eukaryotic/archaeal RNase P protein component 1 family. In terms of assembly, consists of a catalytic RNA component and at least 4-5 protein subunits.

Its subcellular location is the cytoplasm. It catalyses the reaction Endonucleolytic cleavage of RNA, removing 5'-extranucleotides from tRNA precursor.. Part of ribonuclease P, a protein complex that generates mature tRNA molecules by cleaving their 5'-ends. The protein is Ribonuclease P protein component 1 of Archaeoglobus fulgidus (strain ATCC 49558 / DSM 4304 / JCM 9628 / NBRC 100126 / VC-16).